Here is a 1444-residue protein sequence, read N- to C-terminus: Probable chitinase LysM18 (1444 aa).

LysM domains are found at residues 256 to 302 (STVQ…HFCC) and 321 to 369 (TTYT…IICL). The region spanning 382–450 (NAECGPQVPG…TNGCISNCGT (69 aa)) is the Chitin-binding type-1 domain. 4 cysteine pairs are disulfide-bonded: Cys-385–Cys-413, Cys-407–Cys-419, Cys-412–Cys-426, and Cys-444–Cys-448. The 371-residue stretch at 461-831 (YRKVGFYEGF…STSWTKFTSD (371 aa)) folds into the GH18 domain. Glu-582 functions as the Proton donor in the catalytic mechanism. Residues Tyr-583 and Trp-808 each contribute to the chitin site.

This sequence belongs to the glycosyl hydrolase 18 family. Chitinase class V subfamily.

It carries out the reaction Random endo-hydrolysis of N-acetyl-beta-D-glucosaminide (1-&gt;4)-beta-linkages in chitin and chitodextrins.. Functionally, probable chitinase involved in the degradation of chitin, a component of the cell walls of fungi and exoskeletal elements of some animals (including worms and arthropods). Might be involved in manipulation of host defenses for successful infection. The chain is Probable chitinase LysM18 from Penicillium expansum (Blue mold rot fungus).